The primary structure comprises 406 residues: Tyrosine--tRNA ligase (406 aa).

Tyr35 contacts L-tyrosine. The 'HIGH' region motif lies at 40–49 (PTADSLHVGH). Residues Tyr168 and Gln172 each coordinate L-tyrosine. A 'KMSKS' region motif is present at residues 228–232 (KMGKT). ATP is bound at residue Lys231. One can recognise an S4 RNA-binding domain in the interval 340–405 (STVLDVIAKV…GKKNYNKIEI (66 aa)).

It belongs to the class-I aminoacyl-tRNA synthetase family. TyrS type 1 subfamily. Homodimer.

It localises to the cytoplasm. The catalysed reaction is tRNA(Tyr) + L-tyrosine + ATP = L-tyrosyl-tRNA(Tyr) + AMP + diphosphate + H(+). Functionally, catalyzes the attachment of tyrosine to tRNA(Tyr) in a two-step reaction: tyrosine is first activated by ATP to form Tyr-AMP and then transferred to the acceptor end of tRNA(Tyr). This is Tyrosine--tRNA ligase from Clostridium botulinum (strain Eklund 17B / Type B).